Consider the following 152-residue polypeptide: Anaerobic nitrite reductase SYMA (152 aa).

One can recognise a Globin domain in the interval 2–151 (ALTERQEALL…LVATIKAEMK (150 aa)). The Homodimerization signature appears at 35-39 (EAAPE). S45, K59, H63, R93, and H98 together coordinate heme b. The short motif at 105–117 (DPHFEVMKGALLG) is the Homodimerization element.

It belongs to the plant globin family. Homodimer. Heme b serves as cofactor. As to expression, root nodules.

Its subcellular location is the cytoplasm. It localises to the nucleus. It carries out the reaction Fe(III)-heme b-[protein] + nitric oxide + H2O = Fe(II)-heme b-[protein] + nitrite + 2 H(+). Phytoglobin that reduces nitrite to nitric oxide (NO) under anoxic conditions (e.g. during flooding or in waterlogged soil) and upon root nodulation. Required for general plant development and during nodulation, especially for the onset of symbiosis. Monitors nitric oxide (NO) levels during early phase of the nitrogen-fixing symbiosis and buffers oxygen in functioning nodules. May not function as an oxygen storage or transport protein. Has an unusually high affinity for O(2) through a hexacoordinate heme iron because of a very low dissociation constant. The polypeptide is Anaerobic nitrite reductase SYMA (Casuarina glauca (Swamp oak)).